The following is a 383-amino-acid chain: Dimethylsulfoniopropionate lyase 3 (383 aa).

It belongs to the aspartate/glutamate racemases family. ALMA1 subfamily. In terms of assembly, homotetramer.

The catalysed reaction is S,S-dimethyl-beta-propiothetin = acrylate + dimethyl sulfide + H(+). Its function is as follows. Mediates cleavage of dimethylsulfoniopropionate (DMSP) into dimethyl sulfide (DMS) and acrylate. DMS is the principal form by which sulfur is transported from oceans to the atmosphere and is a key component of the ocean sulfur cycle. The polypeptide is Dimethylsulfoniopropionate lyase 3 (Emiliania huxleyi (strain CCMP1516)).